The sequence spans 745 residues: 5-methyltetrahydropteroyltriglutamate--homocysteine methyltransferase (745 aa).

5-methyltetrahydropteroyltri-L-glutamate is bound by residues 19–22 (RELK) and Lys119. L-homocysteine contacts are provided by residues 418–420 (IGS) and Glu471. Residues 418–420 (IGS) and Glu471 contribute to the L-methionine site. Residues 502 to 503 (RC) and Trp548 contribute to the 5-methyltetrahydropteroyltri-L-glutamate site. An L-homocysteine-binding site is contributed by Asp586. Asp586 contacts L-methionine. Glu592 contacts 5-methyltetrahydropteroyltri-L-glutamate. Zn(2+) is bound by residues His628, Cys630, and Glu652. The Proton donor role is filled by His681. Cys713 provides a ligand contact to Zn(2+).

It belongs to the vitamin-B12 independent methionine synthase family. The cofactor is Zn(2+).

The enzyme catalyses 5-methyltetrahydropteroyltri-L-glutamate + L-homocysteine = tetrahydropteroyltri-L-glutamate + L-methionine. It participates in amino-acid biosynthesis; L-methionine biosynthesis via de novo pathway; L-methionine from L-homocysteine (MetE route): step 1/1. Functionally, catalyzes the transfer of a methyl group from 5-methyltetrahydrofolate to homocysteine resulting in methionine formation. This Corynebacterium glutamicum (strain R) protein is 5-methyltetrahydropteroyltriglutamate--homocysteine methyltransferase.